Consider the following 156-residue polypeptide: Small ribosomal subunit protein uS7 (156 aa).

This sequence belongs to the universal ribosomal protein uS7 family. Part of the 30S ribosomal subunit. Contacts proteins S9 and S11.

One of the primary rRNA binding proteins, it binds directly to 16S rRNA where it nucleates assembly of the head domain of the 30S subunit. Is located at the subunit interface close to the decoding center, probably blocks exit of the E-site tRNA. This Jannaschia sp. (strain CCS1) protein is Small ribosomal subunit protein uS7.